A 185-amino-acid polypeptide reads, in one-letter code: Sarcoplasmic calcium-binding proteins II, V, VI, and VII (185 aa).

4 EF-hand domains span residues 5–41 (FQKQ…YKEV), 57–92 (SLED…TIAT), 102–137 (WCQN…FQLQ), and 138–173 (CADV…TSPA). Ca(2+) is bound by residues Asp19, Asn21, Asp23, Ser25, Asp30, Asp70, Asn72, Asp74, Glu81, Asp115, Ser117, Asp119, and Glu126.

Its function is as follows. Like parvalbumins, SCPs seem to be more abundant in fast contracting muscles, but no functional relationship can be established from this distribution. This is Sarcoplasmic calcium-binding proteins II, V, VI, and VII from Branchiostoma lanceolatum (Common lancelet).